Consider the following 196-residue polypeptide: Dual-action ribosomal maturation protein DarP (196 aa).

Belongs to the DarP family.

Its subcellular location is the cytoplasm. Functionally, member of a network of 50S ribosomal subunit biogenesis factors which assembles along the 30S-50S interface, preventing incorrect 23S rRNA structures from forming. Promotes peptidyl transferase center (PTC) maturation. The polypeptide is Dual-action ribosomal maturation protein DarP (Stenotrophomonas maltophilia (strain R551-3)).